The following is a 202-amino-acid chain: Na(+)-translocating NADH-quinone reductase subunit E (202 aa).

Transmembrane regions (helical) follow at residues 11-31 (SVFI…FIAV), 35-55 (IETA…TVPA), 81-101 (FIAL…LEMV), 114-134 (GIFL…LFMI), 144-164 (VVYG…MAGV), and 180-200 (LGIT…FSGI).

This sequence belongs to the NqrDE/RnfAE family. In terms of assembly, composed of six subunits; NqrA, NqrB, NqrC, NqrD, NqrE and NqrF.

The protein localises to the cell inner membrane. It carries out the reaction a ubiquinone + n Na(+)(in) + NADH + H(+) = a ubiquinol + n Na(+)(out) + NAD(+). NQR complex catalyzes the reduction of ubiquinone-1 to ubiquinol by two successive reactions, coupled with the transport of Na(+) ions from the cytoplasm to the periplasm. NqrA to NqrE are probably involved in the second step, the conversion of ubisemiquinone to ubiquinol. In Methylococcus capsulatus (strain ATCC 33009 / NCIMB 11132 / Bath), this protein is Na(+)-translocating NADH-quinone reductase subunit E.